We begin with the raw amino-acid sequence, 105 residues long: Urease subunit beta (105 aa).

Belongs to the urease beta subunit family. As to quaternary structure, heterotrimer of UreA (gamma), UreB (beta) and UreC (alpha) subunits. Three heterotrimers associate to form the active enzyme.

The protein localises to the cytoplasm. The catalysed reaction is urea + 2 H2O + H(+) = hydrogencarbonate + 2 NH4(+). The protein operates within nitrogen metabolism; urea degradation; CO(2) and NH(3) from urea (urease route): step 1/1. This chain is Urease subunit beta, found in Marinomonas sp. (strain MWYL1).